We begin with the raw amino-acid sequence, 395 residues long: Phosphopentomutase (395 aa).

6 residues coordinate Mn(2+): Asp10, Asp294, His299, Asp335, His336, and His347.

It belongs to the phosphopentomutase family. Requires Mn(2+) as cofactor.

It is found in the cytoplasm. The catalysed reaction is 2-deoxy-alpha-D-ribose 1-phosphate = 2-deoxy-D-ribose 5-phosphate. The enzyme catalyses alpha-D-ribose 1-phosphate = D-ribose 5-phosphate. It functions in the pathway carbohydrate degradation; 2-deoxy-D-ribose 1-phosphate degradation; D-glyceraldehyde 3-phosphate and acetaldehyde from 2-deoxy-alpha-D-ribose 1-phosphate: step 1/2. In terms of biological role, isomerase that catalyzes the conversion of deoxy-ribose 1-phosphate (dRib-1-P) and ribose 1-phosphate (Rib-1-P) to deoxy-ribose 5-phosphate (dRib-5-P) and ribose 5-phosphate (Rib-5-P), respectively. This Actinobacillus succinogenes (strain ATCC 55618 / DSM 22257 / CCUG 43843 / 130Z) protein is Phosphopentomutase.